We begin with the raw amino-acid sequence, 118 residues long: Class I hydrophobin hum2 (118 aa).

An N-terminal signal peptide occupies residues 1–19; that stretch reads MQFKTIFATLAAFAAVASA. Cystine bridges form between Cys33–Cys98, Cys40–Cys92, Cys41–Cys74, and Cys99–Cys112.

The protein belongs to the fungal hydrophobin family. As to quaternary structure, self-assembles to form functional amyloid fibrils called rodlets. Self-assembly into fibrillar rodlets occurs spontaneously at hydrophobic:hydrophilic interfaces and the rodlets further associate laterally to form amphipathic monolayers.

The protein localises to the secreted. The protein resides in the cell wall. Its function is as follows. Aerial growth, conidiation, and dispersal of filamentous fungi in the environment rely upon a capability of their secreting small amphipathic proteins called hydrophobins (HPBs) with low sequence identity. Class I can self-assemble into an outermost layer of rodlet bundles on aerial cell surfaces, conferring cellular hydrophobicity that supports fungal growth, development and dispersal; whereas Class II form highly ordered films at water-air interfaces through intermolecular interactions but contribute nothing to the rodlet structure. Hum2 is a class I hydrophobin which that plays a role in, but seems not to be crucial for the formation of aerial hyphae. Hydrophobins of Mycosarcoma maydis have been functionally replaced, at least partially, by repellents. The sequence is that of Class I hydrophobin hum2 from Mycosarcoma maydis (Corn smut fungus).